We begin with the raw amino-acid sequence, 513 residues long: Histidine ammonia-lyase (513 aa).

Residues 144-146 constitute a cross-link (5-imidazolinone (Ala-Gly)); it reads ASG. The residue at position 145 (Ser-145) is a 2,3-didehydroalanine (Ser).

It belongs to the PAL/histidase family. Post-translationally, contains an active site 4-methylidene-imidazol-5-one (MIO), which is formed autocatalytically by cyclization and dehydration of residues Ala-Ser-Gly.

It is found in the cytoplasm. It carries out the reaction L-histidine = trans-urocanate + NH4(+). Its pathway is amino-acid degradation; L-histidine degradation into L-glutamate; N-formimidoyl-L-glutamate from L-histidine: step 1/3. The polypeptide is Histidine ammonia-lyase (Streptococcus pyogenes serotype M6 (strain ATCC BAA-946 / MGAS10394)).